The sequence spans 763 residues: U3 small nucleolar RNA-associated protein 25 homolog (763 aa).

The interval 1–164 is disordered; it reads MGKRRSRGRS…SQKSSEEFTD (164 aa). Promotes p53/TP53 degradation regions lie at residues 1–190 and 580–642; these read MGKR…SQRT and VQLP…KKEE. Ser10 is subject to Phosphoserine. A compositionally biased stretch (basic and acidic residues) spans 25–43; the sequence is RDFGEEHPFYDRVSKKEVK. Phosphoserine is present on residues Ser52, Ser60, and Ser64. The segment covering 54-70 has biased composition (basic and acidic residues); that stretch reads DSSHSESESESEQEHVS. Over residues 84–119 the composition is skewed to acidic residues; sequence EEEEEEEEEEEEEEEDKEEVDDSAVGDSEMNGEDGG. Positions 643–704 are represses p53/TP53 degradation; the sequence is LNFTHICEYT…YELPTYAHFY (62 aa).

This sequence belongs to the UTP25 family. Interacts with CAPN3; the interaction is required for CAPN3 translocation to the nucleolus. In terms of processing, phosphorylated. Phosphorylation is required to promote p53/TP53 degradation in the nucleolus which promotes cell cycle progression and liver development.

The protein resides in the nucleus. Its subcellular location is the nucleolus. In terms of biological role, component of the ribosomal small subunit processome for the biogenesis of ribosomes, functions in pre-ribosomal RNA (pre-rRNA) processing. Essential for embryonic development in part through the regulation of p53 pathway. Controls the expansion growth of digestive organs and liver. Also involved in the sympathetic neuronal development. Mediates, with CAPN3, the proteasome-independent degradation of p53/TP53. This is U3 small nucleolar RNA-associated protein 25 homolog from Rattus norvegicus (Rat).